The sequence spans 78 residues: uncharacterized protein (78 aa).

2 helical membrane passes run 5-24 (LALL…IKLM) and 39-61 (LWLQ…AGFI).

The protein resides in the cell membrane. This is an uncharacterized protein from Bacillus subtilis (strain 168).